The sequence spans 116 residues: Large ribosomal subunit protein uL18 (116 aa).

It belongs to the universal ribosomal protein uL18 family. In terms of assembly, part of the 50S ribosomal subunit; part of the 5S rRNA/L5/L18/L25 subcomplex. Contacts the 5S and 23S rRNAs.

Its function is as follows. This is one of the proteins that bind and probably mediate the attachment of the 5S RNA into the large ribosomal subunit, where it forms part of the central protuberance. The protein is Large ribosomal subunit protein uL18 of Pseudomonas putida (strain W619).